The sequence spans 157 residues: Transcription factor HES-2 (157 aa).

A bHLH domain is found at 13–70; sequence LRKNLKPLLEKRRRARINESLSQLKGLVLPLLGAETSRSSKLEKADILEMTVRFLQEQ. An Orange domain is found at 86-119; sequence YLEGYRACLARLARVLPACSVLEPAVSARLLEHL. Residues 124 to 157 form a disordered region; that stretch reads VSDDSPSLTLPPAPAPAPSPPVPPPGSSGLWRPW. A compositionally biased stretch (pro residues) spans 132 to 149; that stretch reads TLPPAPAPAPSPPVPPPG. The short motif at 154-157 is the WRPW motif element; it reads WRPW.

In terms of assembly, transcription repression requires formation of a complex with a corepressor protein of the Groucho/TLE family.

The protein resides in the nucleus. Functionally, transcriptional repressor of genes that require a bHLH protein for their transcription. This chain is Transcription factor HES-2 (Hes2), found in Mus musculus (Mouse).